The sequence spans 188 residues: Putative manganese efflux pump MntP (188 aa).

The next 6 helical transmembrane spans lie at 2–22 (IMGNLELFLIAVGLSMDAFAV), 39–59 (LITGLFFGGFQALMPLIGFLL), 67–87 (ITAIDHWIAFILLSLIGLNMI), 107–127 (IILSLATSIDALAVGITFAFL), 129–149 (VDIVPAVSMIGVTTFLFSFLG), and 166–186 (LAGGVILILMGLKILLEHLGF).

It belongs to the MntP (TC 9.B.29) family.

It localises to the cell membrane. In terms of biological role, probably functions as a manganese efflux pump. In Desulfitobacterium hafniense (strain Y51), this protein is Putative manganese efflux pump MntP.